Consider the following 115-residue polypeptide: NADH-ubiquinone oxidoreductase chain 3 (115 aa).

3 consecutive transmembrane segments (helical) span residues 3–23 (LLMA…IAFW), 55–75 (FFLV…LLPL), and 84–104 (LSAM…GLMY).

This sequence belongs to the complex I subunit 3 family. As to quaternary structure, core subunit of respiratory chain NADH dehydrogenase (Complex I) which is composed of 45 different subunits. Interacts with TMEM186. Interacts with TMEM242.

The protein resides in the mitochondrion inner membrane. It catalyses the reaction a ubiquinone + NADH + 5 H(+)(in) = a ubiquinol + NAD(+) + 4 H(+)(out). In terms of biological role, core subunit of the mitochondrial membrane respiratory chain NADH dehydrogenase (Complex I) which catalyzes electron transfer from NADH through the respiratory chain, using ubiquinone as an electron acceptor. Essential for the catalytic activity of complex I. The sequence is that of NADH-ubiquinone oxidoreductase chain 3 from Sigmodon ochrognathus (Yellow-nosed cotton rat).